Reading from the N-terminus, the 501-residue chain is L-arabinose isomerase (501 aa).

Residues E306, E333, H350, and H449 each coordinate Mn(2+).

It belongs to the arabinose isomerase family. The cofactor is Mn(2+).

It carries out the reaction beta-L-arabinopyranose = L-ribulose. Its pathway is carbohydrate degradation; L-arabinose degradation via L-ribulose; D-xylulose 5-phosphate from L-arabinose (bacterial route): step 1/3. In terms of biological role, catalyzes the conversion of L-arabinose to L-ribulose. The sequence is that of L-arabinose isomerase from Mycolicibacterium smegmatis (strain ATCC 700084 / mc(2)155) (Mycobacterium smegmatis).